The chain runs to 39 residues: Cytochrome b559 subunit beta (39 aa).

A helical membrane pass occupies residues 14–30 (WLAVHGLAVPTVFFLGS). His18 is a binding site for heme.

Belongs to the PsbE/PsbF family. Heterodimer of an alpha subunit and a beta subunit. PSII is composed of 1 copy each of membrane proteins PsbA, PsbB, PsbC, PsbD, PsbE, PsbF, PsbH, PsbI, PsbJ, PsbK, PsbL, PsbM, PsbT, PsbX, PsbY, PsbZ, Psb30/Ycf12, at least 3 peripheral proteins of the oxygen-evolving complex and a large number of cofactors. It forms dimeric complexes. The cofactor is heme b.

Its subcellular location is the plastid. The protein resides in the chloroplast thylakoid membrane. Functionally, this b-type cytochrome is tightly associated with the reaction center of photosystem II (PSII). PSII is a light-driven water:plastoquinone oxidoreductase that uses light energy to abstract electrons from H(2)O, generating O(2) and a proton gradient subsequently used for ATP formation. It consists of a core antenna complex that captures photons, and an electron transfer chain that converts photonic excitation into a charge separation. This chain is Cytochrome b559 subunit beta, found in Gnetum gnemon (Spanish joint-fir).